A 236-amino-acid chain; its full sequence is 1-(5-phosphoribosyl)-5-[(5-phosphoribosylamino)methylideneamino] imidazole-4-carboxamide isomerase (236 aa).

D8 functions as the Proton acceptor in the catalytic mechanism. D129 functions as the Proton donor in the catalytic mechanism.

The protein belongs to the HisA/HisF family.

Its subcellular location is the cytoplasm. It carries out the reaction 1-(5-phospho-beta-D-ribosyl)-5-[(5-phospho-beta-D-ribosylamino)methylideneamino]imidazole-4-carboxamide = 5-[(5-phospho-1-deoxy-D-ribulos-1-ylimino)methylamino]-1-(5-phospho-beta-D-ribosyl)imidazole-4-carboxamide. It functions in the pathway amino-acid biosynthesis; L-histidine biosynthesis; L-histidine from 5-phospho-alpha-D-ribose 1-diphosphate: step 4/9. The sequence is that of 1-(5-phosphoribosyl)-5-[(5-phosphoribosylamino)methylideneamino] imidazole-4-carboxamide isomerase from Methanoregula boonei (strain DSM 21154 / JCM 14090 / 6A8).